We begin with the raw amino-acid sequence, 177 residues long: MSRVAKNPVAIPQGVEITIGADEVSVKGPLGAVKQYIGNAVTLERDGDALVCKAREGVANSRAMSGTVRALVNNMVTGVTKGFERKLTLVGVGYRAQAQGDKLNLTLGFSHPVVHQMPAGVKVETPTQTEIVIKGIDKQQVGQVAAEVRAYREPEPYKGKGVRYSDEVVVLKETKKK.

It belongs to the universal ribosomal protein uL6 family. As to quaternary structure, part of the 50S ribosomal subunit.

This protein binds to the 23S rRNA, and is important in its secondary structure. It is located near the subunit interface in the base of the L7/L12 stalk, and near the tRNA binding site of the peptidyltransferase center. This is Large ribosomal subunit protein uL6 from Aromatoleum aromaticum (strain DSM 19018 / LMG 30748 / EbN1) (Azoarcus sp. (strain EbN1)).